We begin with the raw amino-acid sequence, 318 residues long: Transaldolase (318 aa).

Lysine 132 functions as the Schiff-base intermediate with substrate in the catalytic mechanism.

The protein belongs to the transaldolase family. Type 1 subfamily. As to quaternary structure, homodimer.

The protein localises to the cytoplasm. It catalyses the reaction D-sedoheptulose 7-phosphate + D-glyceraldehyde 3-phosphate = D-erythrose 4-phosphate + beta-D-fructose 6-phosphate. Its pathway is carbohydrate degradation; pentose phosphate pathway; D-glyceraldehyde 3-phosphate and beta-D-fructose 6-phosphate from D-ribose 5-phosphate and D-xylulose 5-phosphate (non-oxidative stage): step 2/3. In terms of biological role, transaldolase is important for the balance of metabolites in the pentose-phosphate pathway. The polypeptide is Transaldolase (Shewanella sediminis (strain HAW-EB3)).